Here is a 279-residue protein sequence, read N- to C-terminus: GATA transcription factor 15 (279 aa).

The disordered stretch occupies residues 52–94 (AYDDHSTVTTSPSSPSSSSTGSVDCTLSLGTPSSRRAEPVAAA). The span at 58–74 (TVTTSPSSPSSSSTGSV) shows a compositional bias: low complexity. The GATA-type zinc finger occupies 154-179 (CANCGTASTPLWRNGPRGPKSLCNAC).

It belongs to the type IV zinc-finger family. Class B subfamily. As to expression, highly expressed in inflorescences. Expressed in vascular bundles of root stele within the elongation zones, of elongating upper internodes and of the junctions of leaf blades and sheaths.

Its function is as follows. Probable transcription factor that regulates organogenesis during transition from the vegetative to the reproductive phase. Regulates the expression of CYP78A11/PLA1, HD3A and MADS1 during reproductive development in rice. May act upstream of CYP78A11/PLA1 during panicle development. Acts independently of the photoperiodic and gibberellin signaling pathways. This chain is GATA transcription factor 15, found in Oryza sativa subsp. japonica (Rice).